A 908-amino-acid polypeptide reads, in one-letter code: Protein translocase subunit SecA (908 aa).

Residues glutamine 87, 105-109 (GEGKT), and aspartate 512 contribute to the ATP site. The segment at 865-908 (GGDDGSDEMMAHTPMIRDGDKVGRNDPCPCGSGRKYKQCHGKLS) is disordered. The segment covering 879-888 (MIRDGDKVGR) has biased composition (basic and acidic residues). Positions 892, 894, 903, and 904 each coordinate Zn(2+). Residues 898 to 908 (RKYKQCHGKLS) show a composition bias toward basic residues.

This sequence belongs to the SecA family. As to quaternary structure, monomer and homodimer. Part of the essential Sec protein translocation apparatus which comprises SecA, SecYEG and auxiliary proteins SecDF-YajC and YidC. Zn(2+) serves as cofactor.

It localises to the cell inner membrane. The protein resides in the cytoplasm. It carries out the reaction ATP + H2O + cellular proteinSide 1 = ADP + phosphate + cellular proteinSide 2.. Functionally, part of the Sec protein translocase complex. Interacts with the SecYEG preprotein conducting channel. Has a central role in coupling the hydrolysis of ATP to the transfer of proteins into and across the cell membrane, serving both as a receptor for the preprotein-SecB complex and as an ATP-driven molecular motor driving the stepwise translocation of polypeptide chains across the membrane. The protein is Protein translocase subunit SecA of Shewanella sp. (strain MR-7).